Here is a 261-residue protein sequence, read N- to C-terminus: Cytochrome c oxidase subunit 3 (261 aa).

Residues methionine 1–proline 15 are Mitochondrial matrix-facing. The chain crosses the membrane as a helical span at residues tryptophan 16–tryptophan 34. Over phenylalanine 35–threonine 40 the chain is Mitochondrial intermembrane. The helical transmembrane segment at leucine 41–threonine 66 threads the bilayer. Residues phenylalanine 67–threonine 72 are Mitochondrial matrix-facing. Residues serine 73 to serine 105 form a helical membrane-spanning segment. At leucine 106–glutamate 128 the chain is on the mitochondrial intermembrane side. A helical transmembrane segment spans residues valine 129 to methionine 152. Residues glutamate 153–asparagine 155 lie on the Mitochondrial matrix side of the membrane. A helical transmembrane segment spans residues arginine 156–glutamate 183. Residues alanine 184–aspartate 190 are Mitochondrial intermembrane-facing. The chain crosses the membrane as a helical span at residues glycine 191–leucine 223. Over lysine 224–histidine 232 the chain is Mitochondrial matrix. The chain crosses the membrane as a helical span at residues phenylalanine 233–isoleucine 256. The Mitochondrial intermembrane portion of the chain corresponds to tyrosine 257 to serine 261.

This sequence belongs to the cytochrome c oxidase subunit 3 family. As to quaternary structure, component of the cytochrome c oxidase (complex IV, CIV), a multisubunit enzyme composed of 14 subunits. The complex is composed of a catalytic core of 3 subunits MT-CO1, MT-CO2 and MT-CO3, encoded in the mitochondrial DNA, and 11 supernumerary subunits COX4I, COX5A, COX5B, COX6A, COX6B, COX6C, COX7A, COX7B, COX7C, COX8 and NDUFA4, which are encoded in the nuclear genome. The complex exists as a monomer or a dimer and forms supercomplexes (SCs) in the inner mitochondrial membrane with NADH-ubiquinone oxidoreductase (complex I, CI) and ubiquinol-cytochrome c oxidoreductase (cytochrome b-c1 complex, complex III, CIII), resulting in different assemblies (supercomplex SCI(1)III(2)IV(1) and megacomplex MCI(2)III(2)IV(2)).

It is found in the mitochondrion inner membrane. It carries out the reaction 4 Fe(II)-[cytochrome c] + O2 + 8 H(+)(in) = 4 Fe(III)-[cytochrome c] + 2 H2O + 4 H(+)(out). Its function is as follows. Component of the cytochrome c oxidase, the last enzyme in the mitochondrial electron transport chain which drives oxidative phosphorylation. The respiratory chain contains 3 multisubunit complexes succinate dehydrogenase (complex II, CII), ubiquinol-cytochrome c oxidoreductase (cytochrome b-c1 complex, complex III, CIII) and cytochrome c oxidase (complex IV, CIV), that cooperate to transfer electrons derived from NADH and succinate to molecular oxygen, creating an electrochemical gradient over the inner membrane that drives transmembrane transport and the ATP synthase. Cytochrome c oxidase is the component of the respiratory chain that catalyzes the reduction of oxygen to water. Electrons originating from reduced cytochrome c in the intermembrane space (IMS) are transferred via the dinuclear copper A center (CU(A)) of subunit 2 and heme A of subunit 1 to the active site in subunit 1, a binuclear center (BNC) formed by heme A3 and copper B (CU(B)). The BNC reduces molecular oxygen to 2 water molecules using 4 electrons from cytochrome c in the IMS and 4 protons from the mitochondrial matrix. This is Cytochrome c oxidase subunit 3 (MT-CO3) from Equus asinus (Donkey).